A 247-amino-acid polypeptide reads, in one-letter code: Small ribosomal subunit protein uS3 (247 aa).

A KH type-2 domain is found at 38–106 (IRDFLSEGLD…QVQLNILEVK (69 aa)). Residues 214–226 (SLMNARDERPSRG) are compositionally biased toward basic and acidic residues. Positions 214 to 247 (SLMNARDERPSRGRRERPRRGGARRQRAEQKQEG) are disordered. The span at 227–238 (RRERPRRGGARR) shows a compositional bias: basic residues.

Belongs to the universal ribosomal protein uS3 family. In terms of assembly, part of the 30S ribosomal subunit. Forms a tight complex with proteins S10 and S14.

In terms of biological role, binds the lower part of the 30S subunit head. Binds mRNA in the 70S ribosome, positioning it for translation. This is Small ribosomal subunit protein uS3 from Corynebacterium jeikeium (strain K411).